Consider the following 428-residue polypeptide: Enolase (428 aa).

Glutamine 163 contacts (2R)-2-phosphoglycerate. Residue glutamate 205 is the Proton donor of the active site. Positions 242, 285, and 312 each coordinate Mg(2+). (2R)-2-phosphoglycerate is bound by residues lysine 337, arginine 366, serine 367, and lysine 388. The active-site Proton acceptor is lysine 337.

This sequence belongs to the enolase family. Requires Mg(2+) as cofactor.

It localises to the cytoplasm. The protein resides in the secreted. It is found in the cell surface. It catalyses the reaction (2R)-2-phosphoglycerate = phosphoenolpyruvate + H2O. It participates in carbohydrate degradation; glycolysis; pyruvate from D-glyceraldehyde 3-phosphate: step 4/5. Functionally, catalyzes the reversible conversion of 2-phosphoglycerate (2-PG) into phosphoenolpyruvate (PEP). It is essential for the degradation of carbohydrates via glycolysis. This is Enolase from Persephonella marina (strain DSM 14350 / EX-H1).